Here is a 1273-residue protein sequence, read N- to C-terminus: Paired amphipathic helix protein Sin3a (1273 aa).

Disordered regions lie at residues 1 to 23 and 87 to 110; these read MKRRLDDQESPVYAAQQRRIPGS and HPTAVQPHGGQVVQSHAHPAPPVA. S10 is subject to Phosphoserine. The PAH 1 domain maps to 119 to 189; that stretch reads QRLKVEDALS…MGFNTFLPPG (71 aa). An interaction with HCFC1 region spans residues 119 to 196; sequence QRLKVEDALS…PPGYKIEVQT (78 aa). Glycyl lysine isopeptide (Lys-Gly) (interchain with G-Cter in SUMO2) cross-links involve residues K122 and K134. The segment at 205–297 is disordered; that stretch reads PGQVHQIPTH…ISLGTAPSLQ (93 aa). Positions 205–480 are interaction with REST; sequence PGQVHQIPTH…RKALRSAEAY (276 aa). Low complexity predominate over residues 228–237; sequence SQPSAQSAPA. The segment covering 238 to 248 has biased composition (pro residues); that stretch reads PAQPAPQPPPA. Residues 252-266 are compositionally biased toward polar residues; sequence KPSQLQAHTPASQQT. The span at 267–282 shows a compositional bias: pro residues; that stretch reads PPLPPYASPRSPPVQP. S277 carries the phosphoserine modification. T284 is modified (phosphothreonine). Over residues 284 to 297 the composition is skewed to polar residues; sequence TPVTISLGTAPSLQ. A PAH 2 domain is found at 300-383; it reads QPVEFNHAIN…SEFGQFLPDA (84 aa). Residues 398–446 form a disordered region; it reads DSVRNDHGGTVKKPQLNNKPQRPSQNGCQIRRHPTGTTPPVKKKPKLLN. The span at 412-425 shows a compositional bias: polar residues; the sequence is QLNNKPQRPSQNGC. The region spanning 456–525 is the PAH 3 domain; it reads SKHGGGTESL…NWFKNFLGYK (70 aa). Positions 458-525 are interaction with SAP30; sequence HGGGTESLFF…NWFKNFLGYK (68 aa). K469 is subject to N6-acetyllysine. The interval 523–850 is interaction with NCOR1; it reads GYKESVHLET…EMDVDEATGA (328 aa). The segment at 524–659 is interaction with SUDS3 and SAP130; the sequence is YKESVHLETY…KFRLDNTLGG (136 aa). A Glycyl lysine isopeptide (Lys-Gly) (interchain with G-Cter in SUMO2) cross-link involves residue K563. Residues 687-829 are interaction with HDAC1 and ARID4B; sequence NPSIAVPIVL…IPDLLFAQRG (143 aa). Phosphoserine is present on residues S832 and S860. An N6-acetyllysine mark is found at K865 and K875. Residues 888-967 form an interaction with OGT region; it reads VNNNWYIFMR…YYPAFLDMVR (80 aa). Residues 903 to 932 adopt a coiled-coil conformation; sequence CLRLLRICSQAERQIEEENREREWEREVLG. Residues S940, S1089, and S1112 each carry the phosphoserine modification. The segment at 1136–1156 is disordered; the sequence is CQRGREQQEKEGKEGNSKKTM. Residues 1138–1156 are compositionally biased toward basic and acidic residues; it reads RGREQQEKEGKEGNSKKTM.

Interacts with ARID4B, BRMS1L, HCFC1, HDAC1, HDAC2, MXI1, SAP30L, SAP130, SFPQ and TOPORS. Interacts with OGT (via TPRs 1-6); the interaction mediates transcriptional repression in parallel with histone deacetylase. Interacts with BAZ2A, MXD1, MXD3, MXD4, MBD2, DACH1, NCOR1, NR4A2, REST, RLIM, SAP30, SETDB1, SMYD2, and SUDS3. Interacts with PHF12 in a complex composed of HDAC1, PHF12 and SAP30. Interacts with TET1; the interaction recruits SIN3A to gene promoters. The large PER complex involved in the histone deacetylation is composed of at least HDAC1, PER2, SFPQ and SIN3A. Interacts with KLF11. Interacts with PPHLN1. Found in a complex with YY1, GON4L and HDAC1. Interacts (via PAH2) with FOXK1. Interacts with FOXK2. Found in a complex composed of at least SINHCAF, SIN3A, HDAC1, SAP30, RBBP4, OGT and TET1. Interacts with SINHCAF. Interacts with SPHK2. SUMO1 sumoylated by TOPORS. Probably desumoylated by SENP2. Expressed in the developing brain, with highest levels of expression detected in the ventricular zone of various cortical regions.

It is found in the nucleus. It localises to the nucleolus. Its function is as follows. Acts as a transcriptional repressor. Corepressor for REST. Interacts with MXI1 to repress MYC responsive genes and antagonize MYC oncogenic activities. Also interacts with MXD1-MAX heterodimers to repress transcription by tethering SIN3A to DNA. Acts cooperatively with OGT to repress transcription in parallel with histone deacetylation. Involved in the control of the circadian rhythms. Required for the transcriptional repression of circadian target genes, such as PER1, mediated by the large PER complex through histone deacetylation. Cooperates with FOXK1 to regulate cell cycle progression probably by repressing cell cycle inhibitor genes expression. Required for cortical neuron differentiation and callosal axon elongation. In Homo sapiens (Human), this protein is Paired amphipathic helix protein Sin3a.